Here is a 59-residue protein sequence, read N- to C-terminus: Large ribosomal subunit protein uL30 (59 aa).

It belongs to the universal ribosomal protein uL30 family. Part of the 50S ribosomal subunit.

The chain is Large ribosomal subunit protein uL30 from Staphylococcus epidermidis (strain ATCC 12228 / FDA PCI 1200).